Consider the following 862-residue polypeptide: Alanine--tRNA ligase (862 aa).

Residues His552, His556, Cys653, and His657 each coordinate Zn(2+).

It belongs to the class-II aminoacyl-tRNA synthetase family. Requires Zn(2+) as cofactor.

The protein localises to the cytoplasm. The enzyme catalyses tRNA(Ala) + L-alanine + ATP = L-alanyl-tRNA(Ala) + AMP + diphosphate. Functionally, catalyzes the attachment of alanine to tRNA(Ala) in a two-step reaction: alanine is first activated by ATP to form Ala-AMP and then transferred to the acceptor end of tRNA(Ala). Also edits incorrectly charged Ser-tRNA(Ala) and Gly-tRNA(Ala) via its editing domain. This is Alanine--tRNA ligase from Nitrosospira multiformis (strain ATCC 25196 / NCIMB 11849 / C 71).